Consider the following 313-residue polypeptide: Ribosomal RNA small subunit methyltransferase H (313 aa).

S-adenosyl-L-methionine-binding positions include 35–37 (GGH), Asp-55, Phe-79, Asp-100, and Gln-107.

The protein belongs to the methyltransferase superfamily. RsmH family.

It is found in the cytoplasm. It catalyses the reaction cytidine(1402) in 16S rRNA + S-adenosyl-L-methionine = N(4)-methylcytidine(1402) in 16S rRNA + S-adenosyl-L-homocysteine + H(+). Specifically methylates the N4 position of cytidine in position 1402 (C1402) of 16S rRNA. The protein is Ribosomal RNA small subunit methyltransferase H of Burkholderia ambifaria (strain MC40-6).